The chain runs to 383 residues: ATP phosphoribosyltransferase regulatory subunit (383 aa).

The protein belongs to the class-II aminoacyl-tRNA synthetase family. HisZ subfamily. In terms of assembly, heteromultimer composed of HisG and HisZ subunits.

Its subcellular location is the cytoplasm. The protein operates within amino-acid biosynthesis; L-histidine biosynthesis; L-histidine from 5-phospho-alpha-D-ribose 1-diphosphate: step 1/9. In terms of biological role, required for the first step of histidine biosynthesis. May allow the feedback regulation of ATP phosphoribosyltransferase activity by histidine. This is ATP phosphoribosyltransferase regulatory subunit from Desulfitobacterium hafniense (strain DSM 10664 / DCB-2).